Here is a 393-residue protein sequence, read N- to C-terminus: NADH-quinone oxidoreductase subunit D (393 aa).

It belongs to the complex I 49 kDa subunit family. In terms of assembly, NDH-1 is composed of 14 different subunits. Subunits NuoB, C, D, E, F, and G constitute the peripheral sector of the complex.

Its subcellular location is the cell inner membrane. It catalyses the reaction a quinone + NADH + 5 H(+)(in) = a quinol + NAD(+) + 4 H(+)(out). Functionally, NDH-1 shuttles electrons from NADH, via FMN and iron-sulfur (Fe-S) centers, to quinones in the respiratory chain. The immediate electron acceptor for the enzyme in this species is believed to be ubiquinone. Couples the redox reaction to proton translocation (for every two electrons transferred, four hydrogen ions are translocated across the cytoplasmic membrane), and thus conserves the redox energy in a proton gradient. The chain is NADH-quinone oxidoreductase subunit D from Ehrlichia chaffeensis (strain ATCC CRL-10679 / Arkansas).